A 448-amino-acid chain; its full sequence is Exodeoxyribonuclease 7 large subunit (448 aa).

The protein belongs to the XseA family. As to quaternary structure, heterooligomer composed of large and small subunits.

Its subcellular location is the cytoplasm. The catalysed reaction is Exonucleolytic cleavage in either 5'- to 3'- or 3'- to 5'-direction to yield nucleoside 5'-phosphates.. Its function is as follows. Bidirectionally degrades single-stranded DNA into large acid-insoluble oligonucleotides, which are then degraded further into small acid-soluble oligonucleotides. This is Exodeoxyribonuclease 7 large subunit from Tolumonas auensis (strain DSM 9187 / NBRC 110442 / TA 4).